We begin with the raw amino-acid sequence, 144 residues long: MQLNNLKPADGSKHAKRRVGRGIGSGLGKTAGRGHKGQKSRSGGFHKVGFEGGQMPLYRRLPKRGFTSLTKAFTAEVTLRDIERLEAAEVDLLVLKQAGLVGELVKSAKVIKAGELSRKVTIKGLGATAGAKAAIEAAGGQIEA.

Residues 1–48 (MQLNNLKPADGSKHAKRRVGRGIGSGLGKTAGRGHKGQKSRSGGFHKV) form a disordered region. Residues 21-31 (RGIGSGLGKTA) show a composition bias toward gly residues.

It belongs to the universal ribosomal protein uL15 family. Part of the 50S ribosomal subunit.

Functionally, binds to the 23S rRNA. The chain is Large ribosomal subunit protein uL15 from Cupriavidus metallidurans (strain ATCC 43123 / DSM 2839 / NBRC 102507 / CH34) (Ralstonia metallidurans).